Reading from the N-terminus, the 459-residue chain is Elongation factor 1-alpha (459 aa).

A N,N,N-trimethylglycine modification is found at G2. K3 is subject to N6,N6-dimethyllysine; alternate. K3 bears the N6-methyllysine; alternate mark. The tr-type G domain occupies 5–240 (KTHVNVVVIG…DAVDPPTRPS (236 aa)). The segment at 14–21 (GHVDSGKS) is G1. 14-21 (GHVDSGKS) contacts GTP. K30 carries the N6-methyllysine modification. The tract at residues 70–74 (VITID) is G2. At K79 the chain carries N6,N6,N6-trimethyllysine. The G3 stretch occupies residues 91–94 (DAPG). Residues 91–95 (DAPGH) and 153–156 (NKMD) contribute to the GTP site. The segment at 153–156 (NKMD) is G4. Residues 192-194 (SGW) are G5. K316 is modified (N6,N6-dimethyllysine; alternate). K316 bears the N6-methyllysine; alternate mark. K390 carries the post-translational modification N6-methyllysine.

Belongs to the TRAFAC class translation factor GTPase superfamily. Classic translation factor GTPase family. EF-Tu/EF-1A subfamily.

Its subcellular location is the cytoplasm. Functionally, this protein promotes the GTP-dependent binding of aminoacyl-tRNA to the A-site of ribosomes during protein biosynthesis. The chain is Elongation factor 1-alpha (TEF) from Blastobotrys adeninivorans (Yeast).